We begin with the raw amino-acid sequence, 800 residues long: General transcription and DNA repair factor IIH helicase/translocase subunit XPB (800 aa).

Positions 1 to 27 (MSSGDSNLKRRRGGNTGQSSKSYNTWT) are disordered. Polar residues predominate over residues 17–27 (GQSSKSYNTWT). Residues 329-491 (MFGNGRARSG…DLNFLIGPKL (163 aa)) form the Helicase ATP-binding domain. An ATP-binding site is contributed by 342-349 (LPCGAGKS). The short motif at 444 to 447 (DEVH) is the DEVH box element. Positions 546-704 (RACEYLIRFH…ELPGIDQEVN (159 aa)) constitute a Helicase C-terminal domain. The segment at 743–769 (GAKKSKSSAPTVSRTTGGSTRALSGGN) is disordered. Over residues 749 to 764 (SSAPTVSRTTGGSTRA) the composition is skewed to polar residues.

It belongs to the helicase family. RAD25/XPB subfamily. Component of the 7-subunit TFIIH core complex composed of XPB/repB, XPD/repD, gtf2h1, gtf2h2, gtf2h3, gtf2h4 and gtf2h5, which is active in NER. The core complex associates with the 3-subunit CDK-activating kinase (CAK) module composed of cycH/cyclin H, cdk7 and mnat1 to form the 10-subunit holoenzyme (holo-TFIIH) active in transcription.

It is found in the nucleus. The catalysed reaction is Couples ATP hydrolysis with the unwinding of duplex DNA by translocating in the 3'-5' direction.. The enzyme catalyses ATP + H2O = ADP + phosphate + H(+). In terms of biological role, ATP-dependent 3'-5' DNA helicase/translocase; binds dsDNA rather than ssDNA, unzipping it in a translocase rather than classical helicase activity. Component of the general transcription and DNA repair factor IIH (TFIIH) core complex. When complexed to CDK-activating kinase (CAK), involved in RNA transcription by RNA polymerase II. The ATPase activity of XPB/ERCC3, but not its helicase activity, is required for DNA opening; it may wrap around the damaged DNA wedging it open, causing localized melting and twisting that allows XPD/ERCC2 helicase to anchor. The ATP-dependent helicase activity of XPB/ERCC3 may be required for promoter escape. Also involved in transcription-coupled nucleotide excision repair (NER) of damaged DNA. In NER, TFIIH acts by opening DNA around the lesion to allow the excision of the damaged oligonucleotide and its replacement by a new DNA fragment. The structure of the TFIIH transcription complex differs from the NER-TFIIH complex. This is General transcription and DNA repair factor IIH helicase/translocase subunit XPB from Dictyostelium discoideum (Social amoeba).